A 20-amino-acid polypeptide reads, in one-letter code: Thylakoid lumenal 18.4 kDa protein (20 aa).

It is found in the plastid. The protein resides in the chloroplast thylakoid lumen. The sequence is that of Thylakoid lumenal 18.4 kDa protein from Spinacia oleracea (Spinach).